A 149-amino-acid polypeptide reads, in one-letter code: Putative pre-16S rRNA nuclease (149 aa).

Belongs to the YqgF nuclease family.

The protein localises to the cytoplasm. In terms of biological role, could be a nuclease involved in processing of the 5'-end of pre-16S rRNA. This Synechococcus sp. (strain ATCC 27144 / PCC 6301 / SAUG 1402/1) (Anacystis nidulans) protein is Putative pre-16S rRNA nuclease.